Reading from the N-terminus, the 131-residue chain is Large ribosomal subunit protein bL19 (131 aa).

It belongs to the bacterial ribosomal protein bL19 family.

In terms of biological role, this protein is located at the 30S-50S ribosomal subunit interface and may play a role in the structure and function of the aminoacyl-tRNA binding site. This Caulobacter sp. (strain K31) protein is Large ribosomal subunit protein bL19.